The primary structure comprises 524 residues: MIAYIEPYFLENDAEAASAATAAGKSTDGVSESLNIQGEILCGGAAADIAGRDFGGMNCVKPLAVVRPVGPEDIAGAVKAALRSDKLTVAARGNGHSINGQAMAEGGLVVDMSTTAENHFEVGYLSGGDATAFVDVSGGALWEDVLKRCVSEYGLAPRSWTDYLGLTVGGTLSNAGVSGQAFRYGPQTSNVTELDVVTGNGDVVTCSEIENSELFFSVLGGLGQFGIITRARVLLQPAPDMVRWIRVVYTEFDEFTQDAEWLVSQKNESSFDYVEGFVFVNGADPVNGWPTVPLHPDHEFDPTRLPQSCGSVLYCLELGLHYRDSDSNSTIDKRVERLIGRLRFNEGLRFEVDLPYVDFLLRVKRSEEIAKENGTWETPHPWLNLFVSKRDIGDFNRTVFKELVKNGVNGPMLVYPLLRSRWDDRTSVVIPEEGEIFYIVALLRFVPPCAKVSSVEKMVAQNQEIVHWCVKNGIDYKLYLPHYKSQEEWIRHFGNRWSRFVDRKAMFDPMAILSPGQKIFNRSL.

The 181-residue stretch at Asn58–Ala238 folds into the FAD-binding PCMH-type domain. Ala91, Gly93, Asn94, and Gly95 together coordinate FAD. His96 carries the post-translational modification Pros-8alpha-FAD histidine. FAD-binding residues include Ser97, Gln101, Asp162, Thr167, Ser173, Val177, Ile228, Tyr479, Ser514, and Gln517.

Belongs to the oxygen-dependent FAD-linked oxidoreductase family. FAD serves as cofactor. As to expression, expressed in the vasculature of roots, hypocotyls, cotyledons and leaves of young seedlings. In flowers, expressed in the transmitting tissue of the gynoecium prior to pollination. Expressed in the mature embryo sac with maximum activity in the egg cell and the synergids.

It is found in the cytoplasm. It localises to the cytosol. The enzyme catalyses N(6)-dimethylallyladenine + A + H2O = 3-methyl-2-butenal + adenine + AH2. Catalyzes the oxidation of cytokinins, a family of N(6)-substituted adenine derivatives that are plant hormones, where the substituent is an isopentenyl group. Catalyzes in vitro the oxidation of various types of cytokinin nucleotides that are known as direct products of cytokinin biosynthesis. The polypeptide is Cytokinin dehydrogenase 7 (CKX7) (Arabidopsis thaliana (Mouse-ear cress)).